The primary structure comprises 353 residues: Replication-associated protein (353 aa).

The 109-residue stretch at 8-116 (RVQSKNYFLT…DGVTIEWGQF (109 aa)) folds into the CRESS-DNA virus Rep endonuclease domain. Positions 15-18 (FLTY) match the RCR-1 motif. Positions 49, 57, and 59 each coordinate a divalent metal cation. The RCR-2 motif lies at 57 to 59 (HLH). Tyr103 functions as the For DNA cleavage activity in the catalytic mechanism. Positions 103–106 (YIDK) match the RCR-3 motif. Asp107 serves as a coordination point for a divalent metal cation. Residues 143 to 153 (IESALTILKEE) are binding to RBR1. Positions 156–176 (KDYVLQNHNIRSNLERIFFKV) are oligomerization. ATP is bound at residue 222-229 (GDSRTGKT).

This sequence belongs to the geminiviridae Rep protein family. Homooligomer. Interacts with the replication enhancer protein (REn). Interacts with host retinoblastoma-related protein 1 (RBR1), and may thereby induce the transcription of host replicative enzymes even if the cell is not dividing anymore. Interacts with host PCNA. Interacts with host SCE1 protein. Binds to host RAD54 protein to ensure geminiviral replication. It depends on Mg(2+) as a cofactor. Mn(2+) is required as a cofactor.

It is found in the host nucleus. Essential for the replication of viral ssDNA. The closed circular ssDNA genome is first converted to a superhelical dsDNA. Rep binds a specific region at the genome origin of replication. It introduces an endonucleolytic nick within the conserved sequence 5'-TAATATTAC-3' in the intergenic region of the genome present in all geminiviruses, thereby initiating the rolling circle replication (RCR). Following cleavage, binds covalently to the 5'-phosphate of DNA as a tyrosyl ester. The cleavage gives rise to a free 3'-OH that serves as a primer for the cellular DNA polymerase. The polymerase synthesizes the (+) strand DNA by rolling circle mechanism. After one round of replication, a Rep-catalyzed nucleotidyl transfer reaction releases a circular single-stranded virus genome, thereby terminating the replication. Displays origin-specific DNA cleavage, nucleotidyl transferase, ATPase and helicase activities. The protein is Replication-associated protein of Macroptilium lathyroides (Lima bean).